A 173-amino-acid chain; its full sequence is uncharacterized protein (173 aa).

A propeptide spans 1-15 (MERKLSQRAGNTFKG) (leader sequence). N-methylphenylalanine is present on phenylalanine 16. A helical membrane pass occupies residues 16 to 37 (FTLVEVLITLAIISLVFSLILI).

It is found in the membrane. This is an uncharacterized protein from Aquifex aeolicus (strain VF5).